Here is a 374-residue protein sequence, read N- to C-terminus: Queuine tRNA-ribosyltransferase (374 aa).

Asp94 (proton acceptor) is an active-site residue. Residues 94 to 98, Asp148, Gln191, and Gly218 each bind substrate; that span reads DSGGF. Positions 249 to 255 are RNA binding; it reads GVGSPDY. Asp268 serves as the catalytic Nucleophile. Residues 273–277 are RNA binding; important for wobble base 34 recognition; the sequence is TRIGR. Zn(2+)-binding residues include Cys306, Cys308, Cys311, and His337.

The protein belongs to the queuine tRNA-ribosyltransferase family. In terms of assembly, homodimer. Within each dimer, one monomer is responsible for RNA recognition and catalysis, while the other monomer binds to the replacement base PreQ1. It depends on Zn(2+) as a cofactor.

It catalyses the reaction 7-aminomethyl-7-carbaguanine + guanosine(34) in tRNA = 7-aminomethyl-7-carbaguanosine(34) in tRNA + guanine. Its pathway is tRNA modification; tRNA-queuosine biosynthesis. In terms of biological role, catalyzes the base-exchange of a guanine (G) residue with the queuine precursor 7-aminomethyl-7-deazaguanine (PreQ1) at position 34 (anticodon wobble position) in tRNAs with GU(N) anticodons (tRNA-Asp, -Asn, -His and -Tyr). Catalysis occurs through a double-displacement mechanism. The nucleophile active site attacks the C1' of nucleotide 34 to detach the guanine base from the RNA, forming a covalent enzyme-RNA intermediate. The proton acceptor active site deprotonates the incoming PreQ1, allowing a nucleophilic attack on the C1' of the ribose to form the product. After dissociation, two additional enzymatic reactions on the tRNA convert PreQ1 to queuine (Q), resulting in the hypermodified nucleoside queuosine (7-(((4,5-cis-dihydroxy-2-cyclopenten-1-yl)amino)methyl)-7-deazaguanosine). This chain is Queuine tRNA-ribosyltransferase, found in Acetivibrio thermocellus (strain ATCC 27405 / DSM 1237 / JCM 9322 / NBRC 103400 / NCIMB 10682 / NRRL B-4536 / VPI 7372) (Clostridium thermocellum).